The chain runs to 63 residues: Large ribosomal subunit protein uL29 (63 aa).

The protein belongs to the universal ribosomal protein uL29 family.

The protein is Large ribosomal subunit protein uL29 of Aliivibrio fischeri (strain ATCC 700601 / ES114) (Vibrio fischeri).